Here is a 370-residue protein sequence, read N- to C-terminus: Alpha-(1,3)-fucosyltransferase 7 (370 aa).

Over 1 to 36 the chain is Cytoplasmic; the sequence is MVQGCLCWRGCCDLKTSFPWVTNSRRLWMNCIGCNP. Residues 37–59 traverse the membrane as a helical; Signal-anchor for type II membrane protein segment; the sequence is VWRLRAWGCLAGGTTLMVIWLFW. Residues 60 to 370 are Lumenal-facing; sequence LLRSVPGGAP…YEDLESWFQA (311 aa). Asn-86 carries N-linked (GlcNAc...) asparagine glycosylation. Cysteines 96 and 104 form a disulfide. An N-linked (GlcNAc...) asparagine glycan is attached at Asn-109. An intrachain disulfide couples Cys-239 to Cys-242. An N-linked (GlcNAc...) asparagine glycan is attached at Asn-319. Cys-346 and Cys-349 are oxidised to a cystine.

It belongs to the glycosyltransferase 10 family. N-glycosylated. Expressed in lymph node and kidney.

The protein localises to the golgi apparatus. The protein resides in the golgi stack membrane. The catalysed reaction is an N-acetyl-alpha-neuraminyl-(2-&gt;3)-beta-D-galactosyl-(1-&gt;4)-N-acetyl-beta-D-glucosaminyl derivative + GDP-beta-L-fucose = an alpha-Neu5Ac-(2-&gt;3)-beta-D-Gal-(1-&gt;4)-[alpha-L-Fuc-(1-&gt;3)]-beta-D-GlcNAc derivative + GDP + H(+). The enzyme catalyses a neolactoside IV(3)-alpha-NeuAc-nLc4Cer + GDP-beta-L-fucose = a neolactoside IV(3)-alpha-NeuNAc,III(3)-alpha-Fuc-nLc4Cer + GDP + H(+). It catalyses the reaction a neolactoside VI(3)-alpha-NeuNAc-nLc6Cer + GDP-beta-L-fucose = a neolactoside VI(3)-alpha-NeuAc,V(3)-alphaFuc-nLc6Cer + GDP + H(+). It carries out the reaction an alpha-Neu5Ac-(2-&gt;3)-beta-D-Gal-(1-&gt;4)-beta-D-GlcNAc-(1-&gt;3)-beta-D-Gal-(1-&gt;4)-[alpha-L-Fuc-(1-&gt;3)]-beta-D-GlcNAc derivative + GDP-beta-L-fucose = an alpha-Neu5Ac-(2-&gt;3)-beta-D-Gal-(1-&gt;4)-[alpha-L-Fuc-(1-&gt;3)]-beta-D-GlcNAc-(1-&gt;3)-beta-D-Gal-(1-&gt;4)-[alpha-L-Fuc-(1-&gt;3)]-beta-D-GlcNAc derivative + GDP + H(+). The catalysed reaction is an alpha-Neu5Ac-(2-&gt;3)-beta-D-Gal-(1-&gt;4)-beta-D-GlcNAc6S derivative + GDP-beta-L-fucose = an alpha-Neu5Ac-(2-&gt;3)-beta-D-Gal-(1-&gt;4)-[alpha-L-Fuc-(1-&gt;3)]-beta-D-GlcNAc6S derivative + GDP + H(+). The enzyme catalyses alpha-Neu5Ac-(2-&gt;3)-beta-D-Gal-(1-&gt;4)-beta-D-GlcNAc-(1-&gt;3)-beta-D-Gal-(1-&gt;4)-D-Glc + GDP-beta-L-fucose = alpha-Neu5Ac-(2-&gt;3)-beta-D-Gal-(1-&gt;4)-[alpha-L-Fuc-(1-&gt;3)]-beta-D-GlcNAc-(1-&gt;3)-beta-D-Gal-(1-&gt;4)-D-Glc + GDP + H(+). It catalyses the reaction alpha-Neu5Ac-(2-&gt;3)-beta-D-Gal-(1-&gt;4)-beta-D-GlcNAc-(1-&gt;3)-beta-D-Gal-(1-&gt;4)-[alpha-L-Fuc-(1-&gt;3)]-beta-D-GlcNAc-(1-&gt;3)-beta-D-Gal-(1-&gt;4)-beta-D-GlcNAc + GDP-beta-L-fucose = alpha-Neu5Ac-(2-&gt;3)-beta-D-Gal-(1-&gt;4)-[alpha-L-Fuc-(1-&gt;3)]-beta-D-GlcNAc-(1-&gt;3)-beta-D-Gal-(1-&gt;4)-[alpha-L-Fuc-(1-&gt;3)]-beta-D-GlcNAc-(1-&gt;3)-beta-D-Gal-(1-&gt;4)-beta-D-GlcNAc + GDP + H(+). It carries out the reaction alpha-Neu5Ac-(2-&gt;3)-beta-D-Gal-(1-&gt;4)-beta-D-GlcNAc-(1-&gt;3)-beta-D-Gal-(1-&gt;4)-beta-D-GlcNAc-(1-&gt;3)-beta-D-Gal-(1-&gt;4)-beta-D-GlcNAc + GDP-beta-L-fucose = alpha-Neu5Ac-(2-&gt;3)-beta-D-Gal-(1-&gt;4)-[alpha-L-Fuc-(1-&gt;3)]-beta-D-GlcNAc-(1-&gt;3)-beta-D-Gal-(1-&gt;4)-beta-D-GlcNAc-(1-&gt;3)-beta-D-Gal-(1-&gt;4)-beta-D-GlcNAc + GDP + H(+). The protein operates within protein modification; protein glycosylation. With respect to regulation, inhibited by NaCl. Inhibited by GDP in a concentration dependent manner, with an IC(50) value of 93 uM. Also inhibited by GMP and GTP. Inhibited by N-ethylmaleimide. Activated by poly(ethylene glycol) by enhancing the thermal stability of FUT7. Activated by Mn2+, Ca2+, and Mg2+. Both panosialin A and B inhibit activity with IC(50) values of 4.8 and 5.3 ug/ml, respectively. Inhibited by gallic acid (GA) and (-)-epigallocatechin gallate (EGCG) in a time-dependent and irreversible manner with IC(50) values of 60 and 700 nM, respectively. Catalyzes the transfer of L-fucose, from a guanosine diphosphate-beta-L-fucose, to the N-acetyl glucosamine (GlcNAc) of a distal alpha2,3 sialylated lactosamine unit of a glycoprotein or a glycolipid-linked sialopolylactosamines chain through an alpha-1,3 glycosidic linkage and participates in the final fucosylation step in the biosynthesis of the sialyl Lewis X (sLe(x)), a carbohydrate involved in cell and matrix adhesion during leukocyte trafficking and fertilization. In vitro, also synthesizes sialyl-dimeric-Lex structures, from VIM-2 structures and both di-fucosylated and trifucosylated structures from mono-fucosylated precursors. However does not catalyze alpha 1-3 fucosylation when an internal alpha 1-3 fucosylation is present in polylactosamine chain and the fucosylation rate of the internal GlcNAc residues is reduced once fucose has been added to the distal GlcNAc. Also catalyzes the transfer of a fucose from GDP-beta-fucose to the 6-sulfated a(2,3)sialylated substrate to produce 6-sulfo sLex mediating significant L-selectin-dependent cell adhesion. Through sialyl-Lewis(x) biosynthesis, can control SELE- and SELP-mediated cell adhesion with leukocytes and allows leukocytes tethering and rolling along the endothelial tissue thereby enabling the leukocytes to accumulate at a site of inflammation. May enhance embryo implantation through sialyl Lewis X (sLeX)-mediated adhesion of embryo cells to endometrium. May affect insulin signaling by up-regulating the phosphorylation and expression of some signaling molecules involved in the insulin-signaling pathway through SLe(x) which is present on the glycans of the INSRR alpha subunit. The protein is Alpha-(1,3)-fucosyltransferase 7 of Rattus norvegicus (Rat).